The primary structure comprises 177 residues: ATP synthase subunit delta (177 aa).

The protein belongs to the ATPase delta chain family. As to quaternary structure, F-type ATPases have 2 components, F(1) - the catalytic core - and F(0) - the membrane proton channel. F(1) has five subunits: alpha(3), beta(3), gamma(1), delta(1), epsilon(1). F(0) has three main subunits: a(1), b(2) and c(10-14). The alpha and beta chains form an alternating ring which encloses part of the gamma chain. F(1) is attached to F(0) by a central stalk formed by the gamma and epsilon chains, while a peripheral stalk is formed by the delta and b chains.

Its subcellular location is the cell membrane. In terms of biological role, f(1)F(0) ATP synthase produces ATP from ADP in the presence of a proton or sodium gradient. F-type ATPases consist of two structural domains, F(1) containing the extramembraneous catalytic core and F(0) containing the membrane proton channel, linked together by a central stalk and a peripheral stalk. During catalysis, ATP synthesis in the catalytic domain of F(1) is coupled via a rotary mechanism of the central stalk subunits to proton translocation. This protein is part of the stalk that links CF(0) to CF(1). It either transmits conformational changes from CF(0) to CF(1) or is implicated in proton conduction. The protein is ATP synthase subunit delta of Exiguobacterium sp. (strain ATCC BAA-1283 / AT1b).